Consider the following 156-residue polypeptide: Small ribosomal subunit protein uS7 (156 aa).

It belongs to the universal ribosomal protein uS7 family. As to quaternary structure, part of the 30S ribosomal subunit. Contacts proteins S9 and S11.

Functionally, one of the primary rRNA binding proteins, it binds directly to 16S rRNA where it nucleates assembly of the head domain of the 30S subunit. Is located at the subunit interface close to the decoding center, probably blocks exit of the E-site tRNA. This Leuconostoc mesenteroides subsp. mesenteroides (strain ATCC 8293 / DSM 20343 / BCRC 11652 / CCM 1803 / JCM 6124 / NCDO 523 / NBRC 100496 / NCIMB 8023 / NCTC 12954 / NRRL B-1118 / 37Y) protein is Small ribosomal subunit protein uS7.